The primary structure comprises 253 residues: Ribosomal RNA small subunit methyltransferase G (253 aa).

S-adenosyl-L-methionine is bound by residues Gly84, Phe89, 135-136 (AE), and Arg154. The segment at 228 to 253 (TPAKYPRREGVPTHQPLFWKAKEQSR) is disordered.

It belongs to the methyltransferase superfamily. RNA methyltransferase RsmG family.

It localises to the cytoplasm. In terms of biological role, specifically methylates the N7 position of a guanine in 16S rRNA. The sequence is that of Ribosomal RNA small subunit methyltransferase G from Deinococcus radiodurans (strain ATCC 13939 / DSM 20539 / JCM 16871 / CCUG 27074 / LMG 4051 / NBRC 15346 / NCIMB 9279 / VKM B-1422 / R1).